A 310-amino-acid chain; its full sequence is UDP-N-acetylenolpyruvoylglucosamine reductase (310 aa).

Residues 34 to 211 (TGGPAQCVYV…REDMGKIAQE (178 aa)) enclose the FAD-binding PCMH-type domain. Residue arginine 177 is part of the active site. The Proton donor role is filled by serine 225. Glutamate 295 is a catalytic residue.

Belongs to the MurB family. It depends on FAD as a cofactor.

It localises to the cytoplasm. It catalyses the reaction UDP-N-acetyl-alpha-D-muramate + NADP(+) = UDP-N-acetyl-3-O-(1-carboxyvinyl)-alpha-D-glucosamine + NADPH + H(+). It participates in cell wall biogenesis; peptidoglycan biosynthesis. Cell wall formation. The chain is UDP-N-acetylenolpyruvoylglucosamine reductase from Beijerinckia indica subsp. indica (strain ATCC 9039 / DSM 1715 / NCIMB 8712).